We begin with the raw amino-acid sequence, 219 residues long: Ribosome maturation factor RimP (219 aa).

Disordered regions lie at residues 1 to 38 (MTQR…LATR) and 189 to 219 (VEFT…DEER). A compositionally biased stretch (acidic residues) spans 198–219 (DAFDGTDEAGDFDDDDVEDEER).

This sequence belongs to the RimP family.

The protein localises to the cytoplasm. Required for maturation of 30S ribosomal subunits. The sequence is that of Ribosome maturation factor RimP from Salinispora arenicola (strain CNS-205).